We begin with the raw amino-acid sequence, 236 residues long: Rho-related GTP-binding protein RhoV (236 aa).

The segment at 1 to 28 (MPPRELSEAEPPPLPASTPPPRRRSAPP) is disordered. Over residues 10–20 (EPPPLPASTPP) the composition is skewed to pro residues. Residue Ser25 is modified to Phosphoserine. GTP is bound by residues 38-45 (GDGAVGKS), 85-89 (DTAGQ), and 143-146 (TQAD). A lipid anchor (S-palmitoyl cysteine) is attached at Cys234.

Belongs to the small GTPase superfamily. Rho family. Interacts with PAK2. Mg(2+) is required as a cofactor. Highly expressed in brain and testis and at lower levels in spleen and lung.

It is found in the cell membrane. The protein resides in the endosome membrane. Functionally, plays a role in the control of the actin cytoskeleton via activation of the JNK pathway. In Rattus norvegicus (Rat), this protein is Rho-related GTP-binding protein RhoV.